The following is a 130-amino-acid chain: Small ribosomal subunit protein uS11 (130 aa).

The protein belongs to the universal ribosomal protein uS11 family. Part of the 30S ribosomal subunit. Interacts with proteins S7 and S18. Binds to IF-3.

Its function is as follows. Located on the platform of the 30S subunit, it bridges several disparate RNA helices of the 16S rRNA. Forms part of the Shine-Dalgarno cleft in the 70S ribosome. This chain is Small ribosomal subunit protein uS11, found in Prochlorococcus marinus (strain NATL2A).